The primary structure comprises 1461 residues: Autotransporter adhesin SadA (1461 aa).

The first 54 residues, 1 to 54, serve as a signal peptide directing secretion; the sequence is MNRIFKVLWNAATGTFVVTSETAKSRGKKNGRRKLAVSALIGLSSIMVSADALA. Residues 55–1372 form a surface exposed passenger domain region; that stretch reads NAGNDTGDGV…EEANTYTDQK (1318 aa). The interval 1373–1461 is translocator domain; sequence MGEMNSKIKG…SAAIGAGFQW (89 aa). The next 4 beta stranded transmembrane spans lie at 1407-1417, 1421-1431, 1440-1446, and 1450-1461; these read GANMTSIAGGT, ESAVAIGVSMV, KLQGTSN, and DYSAAIGAGFQW.

Belongs to the autotransporter-2 (AT-2) (TC 1.B.40) family. In terms of assembly, homotrimer.

The protein localises to the cell surface. Its subcellular location is the cell outer membrane. Involved in cell aggregation, biofilm formation, and adhesion to human intestinal epithelial cells. This is Autotransporter adhesin SadA from Salmonella typhimurium (strain LT2 / SGSC1412 / ATCC 700720).